Here is a 261-residue protein sequence, read N- to C-terminus: MSKVNDFGFSESNGDEVGITMSTPFLESDNSNTQSISGRIGSNNNSNSKNSGGIGSGGGININGDPYGNSGGGGSKTSNNFGSGTIAFMKGLTHPVAASVHVLFKLSAILLYLFSGLFGGGFILTFILCILLLSFDFYSVKNITGRLLVGLRWWNQVDPKDGSNKWYFETAPEGHRVNQIESLIFWITLYGTPIFWILFFLKCIISLQFAWILIPIIALSLNMANVYGFYKCSNSNVSNAAATFASNYIGRSLLQRASSFM.

The span at 20 to 34 (TMSTPFLESDNSNTQ) shows a compositional bias: polar residues. The interval 20 to 55 (TMSTPFLESDNSNTQSISGRIGSNNNSNSKNSGGIG) is disordered. A compositionally biased stretch (low complexity) spans 35–51 (SISGRIGSNNNSNSKNS). 3 helical membrane-spanning segments follow: residues 113–133 (LFSGLFGGGFILTFILCILLL), 183–200 (LIFWITLYGTPIFWILFF), and 204–226 (IISLQFAWILIPIIALSLNMANV).

This sequence belongs to the TVP23 family.

It localises to the membrane. This is an uncharacterized protein from Dictyostelium discoideum (Social amoeba).